Consider the following 235-residue polypeptide: uncharacterized protein (235 aa).

Residues 82-221 (LAFKKFPPDP…DTGELIRESP (140 aa)) form the N-acetyltransferase domain.

This sequence belongs to the acetyltransferase family.

It is found in the golgi apparatus membrane. Its subcellular location is the endoplasmic reticulum membrane. This is an uncharacterized protein from Schizosaccharomyces pombe (strain 972 / ATCC 24843) (Fission yeast).